Reading from the N-terminus, the 311-residue chain is VQ motif-containing protein 9 (311 aa).

The span at 1–27 (MDKSCNSSGDSSAVSASATSSTGNNTT) shows a compositional bias: low complexity. Residues 1–78 (MDKSCNSSGD…QINQGNLHQH (78 aa)) are disordered. Residues 90–99 (FRDVVQKLTG) carry the VQ motif. Disordered regions lie at residues 103-125 (HERI…SSRL), 228-266 (QQEN…PPLF), and 290-311 (GQLG…YKGH). Positions 240–249 (FPPPHPPPPS) are enriched in pro residues. The span at 290-302 (GQLGFPVSPTTVP) shows a compositional bias: low complexity.

As to quaternary structure, interacts (via N-terminus) with WRKY8. In terms of tissue distribution, highly expressed in roots and at lower levels in rosette leaves, cauline leaves, stems, flowers and siliques.

Its subcellular location is the nucleus. Its function is as follows. Functions as a negative regulator of salt stress response. Functions as a repressor of WRKY8 transcription factor by decreasing the DNA-binding activity of WRKY8 and acts antagonistically with WRKY8 to regulate sodium and potassium homeostasis under salt stress. This is VQ motif-containing protein 9 from Arabidopsis thaliana (Mouse-ear cress).